A 426-amino-acid chain; its full sequence is N-formyl-4-amino-5-aminomethyl-2-methylpyrimidine deformylase (426 aa).

A coiled-coil region spans residues 1-31 (MDQQIYSLQKKVEEHKEELIQLAKTLISYQT). Residue histidine 89 participates in Zn(2+) binding. Aspartate 91 is a catalytic residue. Aspartate 122 lines the Zn(2+) pocket. Glutamate 156 serves as the catalytic Proton acceptor. The Zn(2+) site is built by glutamate 157, aspartate 180, and histidine 394.

The protein belongs to the peptidase M20A family. Requires Zn(2+) as cofactor. The cofactor is Co(2+).

The catalysed reaction is N-formyl-4-amino-5-aminomethyl-2-methylpyrimidine + H2O = 4-amino-5-aminomethyl-2-methylpyrimidine + formate. The protein operates within cofactor biosynthesis; thiamine diphosphate biosynthesis. Catalyzes the deformylation of the formylaminopyrimidine N-formyl-4-amino-5-aminomethyl-2-methylpyrimidine (FAMP) to give the corresponding aminopyrimidine. The protein is N-formyl-4-amino-5-aminomethyl-2-methylpyrimidine deformylase of Bacillus subtilis (strain 168).